The chain runs to 163 residues: Probable ribosome biogenesis protein RLP24 (163 aa).

It belongs to the eukaryotic ribosomal protein eL24 family. Associated with nucleolar and cytoplasmic pre-60S particles. At the end of biogenesis it dissociates from cytoplasmic pre-60S particles and is likely to be exchanged for its ribosomal homolog, RPL24.

It is found in the nucleus. The protein localises to the nucleolus. Functionally, involved in the biogenesis of the 60S ribosomal subunit. Ensures the docking of GTPBP4/NOG1 to pre-60S particles. The polypeptide is Probable ribosome biogenesis protein RLP24 (RSL24D1) (Pongo abelii (Sumatran orangutan)).